The following is a 313-amino-acid chain: Short-chain dehydrogenase/reductase family 9C member 7 (313 aa).

Residue 29-53 (FITGCDSGFGNLLAKQLVDRGMQVL) participates in NADP(+) binding. Ser160 is a binding site for substrate. The active-site Proton acceptor is Tyr172. Position 185 is a phosphoserine (Ser185).

The protein belongs to the short-chain dehydrogenases/reductases (SDR) family. As to expression, expressed in the skin. Expressed in granular and cornified layers of the epidermis (at protein level). Highly expressed in liver.

The protein resides in the cytoplasm. It carries out the reaction a N-[omega-(9R,10R)-epoxy-(13R)-hydroxy-(11E)-octadecenoyloxy]acyl-beta-D-glucosyl-(1&lt;-&gt;1)-sphing-4E-enine + NAD(+) = a N-[omega-(9R,10R)-epoxy-13-oxo-(11E)-octadecenoyloxy]acyl-beta-D-glucosyl-(1&lt;-&gt;1)-sphing-4E-enine + NADH + H(+). The catalysed reaction is a N-[omega-(9R,10R)-epoxy-(13R)-hydroxy-(11E)-octadecenoyloxy]-acylsphing-4E-enine + NAD(+) = a N-[omega-(9R,10R)-epoxy-13-oxo-(11E)-octadecenoyloxy]-acylsphing-4E-enine + NADH + H(+). Plays a crucial role in the formation of the epidermal permeability barrier. Catalyzes the NAD+-dependent dehydrogenation of the linoleate 9,10-trans-epoxy-11E-13-alcohol esterified in omega-O-acylceramides (such as in N-[omega-(9R,10R)-epoxy-(13R)-hydroxy-(11E)-octadecenoyloxy]-acylsphing-4E-enine) to the corresponding 13-ketone, the reactive moiety required for binding of epidermal ceramides to proteins. Displays weak conversion of all-trans-retinal to all-trans-retinol in the presence of NADH. Has apparently no steroid dehydrogenase activity. The chain is Short-chain dehydrogenase/reductase family 9C member 7 (SDR9C7) from Homo sapiens (Human).